Here is a 108-residue protein sequence, read N- to C-terminus: Nucleoid-associated protein Bcen_6253 (108 aa).

Positions 85–95 are enriched in polar residues; that stretch reads ATSQEKMSGMT. The tract at residues 85–108 is disordered; sequence ATSQEKMSGMTSGLPLPPGFKLPF. The segment covering 99–108 has biased composition (pro residues); that stretch reads PLPPGFKLPF.

This sequence belongs to the YbaB/EbfC family. Homodimer.

The protein localises to the cytoplasm. It localises to the nucleoid. Its function is as follows. Binds to DNA and alters its conformation. May be involved in regulation of gene expression, nucleoid organization and DNA protection. The chain is Nucleoid-associated protein Bcen_6253 from Burkholderia orbicola (strain AU 1054).